The following is a 184-amino-acid chain: Tumor necrosis factor alpha-induced protein 8-like protein 2 (184 aa).

Serine 3 carries the phosphoserine modification.

The protein belongs to the TNFAIP8 family. TNFAIP8L2 subfamily. May interact with CASP8; however, such result is unclear since could not reproduce the interaction with CASP8. Interacts with RAC1. In terms of processing, phosphorylated by TAK1/MAP3K7; this phosphorylation triggers association with BTRC and subsequent ubiquitination and degradation. Post-translationally, ubiquitinated in a BTRC-depdent manner; leading to degradation mediated through the proteasome pathway.

The protein resides in the cytoplasm. It is found in the nucleus. Its subcellular location is the lysosome. Functionally, acts as a negative regulator of innate and adaptive immunity by maintaining immune homeostasis. Plays a regulatory role in the Toll-like signaling pathway by determining the strength of LPS-induced signaling and gene expression. Inhibits TCR-mediated T-cell activation and negatively regulate T-cell function to prevent hyperresponsiveness. Also inhibits autolysosome formation via negatively modulating MTOR activation by interacting with RAC1 and promoting the disassociation of the RAC1-MTOR complex. Plays an essential role in NK-cell biology by acting as a checkpoint and displaying an expression pattern correlating with NK-cell maturation process and by negatively regulating NK-cell maturation and antitumor immunity. Mechanistically, suppresses IL-15-triggered mTOR activity in NK-cells. In Otolemur garnettii (Small-eared galago), this protein is Tumor necrosis factor alpha-induced protein 8-like protein 2 (TNFAIP8L2).